We begin with the raw amino-acid sequence, 707 residues long: Leukotoxin export ATP-binding protein LtxB (707 aa).

The Peptidase C39 domain occupies 4 to 125 (QKNTNLALQA…ERYQSKVILI (122 aa)). Histidine 83 is a catalytic residue. Transmembrane regions (helical) follow at residues 158-178 (LIVS…FQVV), 191-211 (LNVI…LGGL), 269-289 (ALTS…MWYY), 295-315 (LVVL…SPIL), and 387-407 (AVMV…DLSI). Residues 158-436 (LIVSIFLQIF…LAQIWQDFQQ (279 aa)) enclose the ABC transmembrane type-1 domain. Residues 468–703 (ISFRNIKFRY…EKGLYSYLHQ (236 aa)) enclose the ABC transporter domain. ATP is bound at residue 502-509 (GRSGSGKS).

It belongs to the ABC transporter superfamily. Protein-1 exporter (TC 3.A.1.109) family. As to quaternary structure, probably part of a complex composed of LtxB, LtxD and TdeA, which forms a single transport channel across the two membranes.

The protein resides in the cell inner membrane. The catalysed reaction is ATP + H2O + proteinSide 1 = ADP + phosphate + proteinSide 2.. Its function is as follows. Involved in the export of the LtxA leukotoxin. The chain is Leukotoxin export ATP-binding protein LtxB from Aggregatibacter actinomycetemcomitans (Actinobacillus actinomycetemcomitans).